Reading from the N-terminus, the 255-residue chain is Ribosomal RNA small subunit methyltransferase A (255 aa).

Residues asparagine 12, leucine 14, glycine 39, glutamate 60, aspartate 84, and asparagine 102 each contribute to the S-adenosyl-L-methionine site.

Belongs to the class I-like SAM-binding methyltransferase superfamily. rRNA adenine N(6)-methyltransferase family. RsmA subfamily.

The protein resides in the cytoplasm. The catalysed reaction is adenosine(1518)/adenosine(1519) in 16S rRNA + 4 S-adenosyl-L-methionine = N(6)-dimethyladenosine(1518)/N(6)-dimethyladenosine(1519) in 16S rRNA + 4 S-adenosyl-L-homocysteine + 4 H(+). In terms of biological role, specifically dimethylates two adjacent adenosines (A1518 and A1519) in the loop of a conserved hairpin near the 3'-end of 16S rRNA in the 30S particle. May play a critical role in biogenesis of 30S subunits. The polypeptide is Ribosomal RNA small subunit methyltransferase A (Methylobacillus flagellatus (strain ATCC 51484 / DSM 6875 / VKM B-1610 / KT)).